The chain runs to 288 residues: MASAKEIRNKIGSVQNTQKITKAMEMVAASKMRKTQDAMESSRPYAETMRKVIGHIALGNLEYKHPYLEVREAKRVGYIIVSSDRGLCGGLNINLFKSAMTDIKGWADQGADVEMALVGAKATAFFNSYGGNVVAQVSGLGDSPTVNELIGTVGVMLKKYNEGLLDRLYLVYNQFVNTMIQEPVIDQLLPLPKSKDEEMQRNHSWDYIYEPEPKPLLDTLLVRYVESQVYQGVVENLACEQAARMVAMKSATDNAGDIINDLQLVYNKARQAAITQELSEIVSGASAV.

It belongs to the ATPase gamma chain family. As to quaternary structure, F-type ATPases have 2 components, CF(1) - the catalytic core - and CF(0) - the membrane proton channel. CF(1) has five subunits: alpha(3), beta(3), gamma(1), delta(1), epsilon(1). CF(0) has three main subunits: a, b and c.

The protein resides in the cell inner membrane. Produces ATP from ADP in the presence of a proton gradient across the membrane. The gamma chain is believed to be important in regulating ATPase activity and the flow of protons through the CF(0) complex. In Photobacterium profundum (strain SS9), this protein is ATP synthase gamma chain 1.